We begin with the raw amino-acid sequence, 934 residues long: Bifunctional uridylyltransferase/uridylyl-removing enzyme (934 aa).

The interval 1-379 is uridylyltransferase; that stretch reads MSAHDLKLEE…TFSRRKRKLS (379 aa). The interval 380–736 is uridylyl-removing; sequence ADGDFVSENH…AKPHTFEAVT (357 aa). The 118-residue stretch at 496–613 folds into the HD domain; the sequence is VDEHLLRCIA…IDFADTVQTM (118 aa). ACT domains lie at 737–819 and 848–931; these read EITV…VLAK and VIEV…RSSQ.

The protein belongs to the GlnD family. Mg(2+) serves as cofactor.

The catalysed reaction is [protein-PII]-L-tyrosine + UTP = [protein-PII]-uridylyl-L-tyrosine + diphosphate. The enzyme catalyses [protein-PII]-uridylyl-L-tyrosine + H2O = [protein-PII]-L-tyrosine + UMP + H(+). Its activity is regulated as follows. Uridylyltransferase (UTase) activity is inhibited by glutamine, while glutamine activates uridylyl-removing (UR) activity. Functionally, modifies, by uridylylation and deuridylylation, the PII regulatory proteins (GlnB and homologs), in response to the nitrogen status of the cell that GlnD senses through the glutamine level. Under low glutamine levels, catalyzes the conversion of the PII proteins and UTP to PII-UMP and PPi, while under higher glutamine levels, GlnD hydrolyzes PII-UMP to PII and UMP (deuridylylation). Thus, controls uridylylation state and activity of the PII proteins, and plays an important role in the regulation of nitrogen assimilation and metabolism. In Brucella anthropi (strain ATCC 49188 / DSM 6882 / CCUG 24695 / JCM 21032 / LMG 3331 / NBRC 15819 / NCTC 12168 / Alc 37) (Ochrobactrum anthropi), this protein is Bifunctional uridylyltransferase/uridylyl-removing enzyme.